Reading from the N-terminus, the 509-residue chain is Lengsin (509 aa).

The disordered stretch occupies residues 1-34 (MNNEEDLLQEDSTRDEGNETEANSMNTLRRTRKK). Residues 83–177 (NRLQFVRFEA…VICDTFTVTG (95 aa)) enclose the GS beta-grasp domain. Positions 184-509 (PRYIAKRQLS…ERNKFLEYFI (326 aa)) constitute a GS catalytic domain.

It belongs to the glutamine synthetase family. Dodecamer. Interacts with BFSP2 and VIM. As to expression, abundantly expressed in lens.

In terms of biological role, may act as a component of the cytoskeleton or as a chaperone for the reorganization of intermediate filament proteins during terminal differentiation in the lens. Does not seem to have enzymatic activity. The polypeptide is Lengsin (LGSN) (Homo sapiens (Human)).